The chain runs to 359 residues: Peptide chain release factor 1 (359 aa).

The residue at position 235 (Q235) is an N5-methylglutamine. The interval Q283–Y309 is disordered.

This sequence belongs to the prokaryotic/mitochondrial release factor family. Post-translationally, methylated by PrmC. Methylation increases the termination efficiency of RF1.

The protein resides in the cytoplasm. Functionally, peptide chain release factor 1 directs the termination of translation in response to the peptide chain termination codons UAG and UAA. The sequence is that of Peptide chain release factor 1 from Brucella melitensis biotype 2 (strain ATCC 23457).